A 376-amino-acid chain; its full sequence is Anhydro-N-acetylmuramic acid kinase (376 aa).

Residue 16–23 (GTSMDGVD) coordinates ATP.

This sequence belongs to the anhydro-N-acetylmuramic acid kinase family.

It carries out the reaction 1,6-anhydro-N-acetyl-beta-muramate + ATP + H2O = N-acetyl-D-muramate 6-phosphate + ADP + H(+). It participates in amino-sugar metabolism; 1,6-anhydro-N-acetylmuramate degradation. It functions in the pathway cell wall biogenesis; peptidoglycan recycling. Its function is as follows. Catalyzes the specific phosphorylation of 1,6-anhydro-N-acetylmuramic acid (anhMurNAc) with the simultaneous cleavage of the 1,6-anhydro ring, generating MurNAc-6-P. Is required for the utilization of anhMurNAc either imported from the medium or derived from its own cell wall murein, and thus plays a role in cell wall recycling. This Paraburkholderia xenovorans (strain LB400) protein is Anhydro-N-acetylmuramic acid kinase.